Consider the following 526-residue polypeptide: Ubiquitin carboxyl-terminal hydrolase 17-like protein A (526 aa).

The tract at residues 1-21 is disordered; sequence MVVALSFPEADPALSSPDAPE. Residues 51-348 form the USP domain; that stretch reads CGLQNTGNSC…NAYVLFYVQQ (298 aa). C60 acts as the Nucleophile in catalysis. The active-site Proton acceptor is H307. Basic residues predominate over residues 374-385; sequence KKSRRKKHKKKS. Disordered stretches follow at residues 374–394 and 465–494; these read KKSR…LGEP and RSTA…SQGP. Residues 473–486 show a composition bias toward basic and acidic residues; that stretch reads DSPDKENQPLHNAD.

This sequence belongs to the peptidase C19 family. Post-translationally, polyubiquitinated; ubiquitination leads to its subsequent degradation. In terms of tissue distribution, expressed in hematopoietic progenitor cell lines Ba/F3 and FDCP1. Not detected in brain, lung, liver, kidney, thymus, spleen and bone marrow.

It catalyses the reaction Thiol-dependent hydrolysis of ester, thioester, amide, peptide and isopeptide bonds formed by the C-terminal Gly of ubiquitin (a 76-residue protein attached to proteins as an intracellular targeting signal).. In terms of biological role, deubiquitinating enzyme that removes conjugated ubiquitin from specific proteins to regulate different cellular processes. Has deubiquitinating enzyme activity for DNAH5, suggesting a role in the regulation of DNAH5 degradation by the ubiquitin-proteasome pathway. Has growth-suppressing activity; induces arrest in G1 phase upon controlled expression. This chain is Ubiquitin carboxyl-terminal hydrolase 17-like protein A (Usp17la), found in Mus musculus (Mouse).